The primary structure comprises 967 residues: Phosphoenolpyruvate carboxylase (967 aa).

Ser-10 carries the phosphoserine modification. Catalysis depends on residues His-171 and Lys-601. A disordered region spans residues 915 to 936; it reads NASRLPLSRESPEATKPADELV. Over residues 924–933 the composition is skewed to basic and acidic residues; that stretch reads ESPEATKPAD.

Belongs to the PEPCase type 1 family. Homotetramer. The cofactor is Mg(2+).

It is found in the cytoplasm. It carries out the reaction oxaloacetate + phosphate = phosphoenolpyruvate + hydrogencarbonate. Its activity is regulated as follows. By light-reversible phosphorylation. Through the carboxylation of phosphoenolpyruvate (PEP) it forms oxaloacetate, a four-carbon dicarboxylic acid source for the tricarboxylic acid cycle. The protein is Phosphoenolpyruvate carboxylase of Pisum sativum (Garden pea).